Reading from the N-terminus, the 270-residue chain is tRNA pseudouridine synthase A (270 aa).

Aspartate 60 acts as the Nucleophile in catalysis. Positions 107 to 111 are RNA binding; that stretch reads FHARF. Position 118 (tyrosine 118) interacts with substrate. An interaction with tRNA region spans residues 168–172; sequence QCQSR.

It belongs to the tRNA pseudouridine synthase TruA family. In terms of assembly, homodimer.

It carries out the reaction uridine(38/39/40) in tRNA = pseudouridine(38/39/40) in tRNA. Formation of pseudouridine at positions 38, 39 and 40 in the anticodon stem and loop of transfer RNAs. The chain is tRNA pseudouridine synthase A from Shigella boydii serotype 18 (strain CDC 3083-94 / BS512).